The following is a 371-amino-acid chain: Trans-enoyl reductase calK (371 aa).

51-54 is a binding site for NADP(+); the sequence is NDHK. 145–152 contacts substrate; that stretch reads WSTISLAF. NADP(+) contacts are provided by residues 181–184, 204–207, Y222, and 269–270; these read GTAS, SNQS, and LE. Residue 289 to 293 participates in substrate binding; sequence GFQVL. 359-360 contributes to the NADP(+) binding site; the sequence is VR.

The protein belongs to the zinc-containing alcohol dehydrogenase family. In terms of assembly, monomer.

The protein operates within secondary metabolite biosynthesis. Trans-enoyl reductase; part of the gene cluster that mediates the biosynthesis of calbistrin A and related compounds. Calbistrin A is a secondary metabolite with an interesting structure that was recently found to have bioactivity against leukemia cells. It consists of two polyketides linked by an ester bond: a bicyclic decalin containing polyketide and a linear 12 carbon dioic acid structure. The polyketide synthase calA is probably responsible for forming the decalin moiety. Because calA lacks a designated enoylreductase (ER) domain, the required activity is provided by the trans-enoyl reductase calK. Following release from the PKS, calF then probably catalyzes the oxidation and the subsequent Diels Alder cycloisomerization that lead to the formation of the decalin moiety. The decalin polyketide backbone includes two C-methyl groups, at C7 and C11 in backbone, of which the C7 position is probably methylated by the methyltransferase domain of calA. A candidate for adding the methyl group at C11, if not done by CalA, is the cluster methyltransferase calH. Several additional tailoring enzymes within the cluster could be involved in the modification of the decalin polyketide product. Those include the 3 cytochrome P450 monooxygenases CalE, CalG and CalL, of which one might be responsible for the introduction of the extra hydroxyl group attached to the backbone of the decalin moiety, at position C9 in the backbone, that allows for attachment of the linear moiety. One tailoring enzyme activity that is expected to be involved in biosynthesis of calbistrin is an acyltransferase for connecting the two polyketide synthase products, and which could be performed by the cluster acyltransferase calJ. The enzyme responsible for the biosynthesis of the linear moiety, probably a second PKS, has not been identified yet. This is Trans-enoyl reductase calK from Penicillium decumbens.